The sequence spans 203 residues: A-type ATP synthase subunit E (203 aa).

Belongs to the V-ATPase E subunit family. Has multiple subunits with at least A(3), B(3), C, D, E, F, H, I and proteolipid K(x).

The protein localises to the cell membrane. Component of the A-type ATP synthase that produces ATP from ADP in the presence of a proton gradient across the membrane. This is A-type ATP synthase subunit E from Thermococcus sibiricus (strain DSM 12597 / MM 739).